The following is a 203-amino-acid chain: Imidazoleglycerol-phosphate dehydratase (203 aa).

Belongs to the imidazoleglycerol-phosphate dehydratase family.

It localises to the cytoplasm. It catalyses the reaction D-erythro-1-(imidazol-4-yl)glycerol 3-phosphate = 3-(imidazol-4-yl)-2-oxopropyl phosphate + H2O. It participates in amino-acid biosynthesis; L-histidine biosynthesis; L-histidine from 5-phospho-alpha-D-ribose 1-diphosphate: step 6/9. The polypeptide is Imidazoleglycerol-phosphate dehydratase (Synechococcus sp. (strain RCC307)).